Here is an 887-residue protein sequence, read N- to C-terminus: DNA mismatch repair protein MutS (887 aa).

Residue 621–628 (GPNMGGKS) participates in ATP binding. Residues 828–853 (AEPEPNKPAAAAKTKPASPQPDLFAS) form a disordered region. Low complexity predominate over residues 834–848 (KPAAAAKTKPASPQP).

The protein belongs to the DNA mismatch repair MutS family.

In terms of biological role, this protein is involved in the repair of mismatches in DNA. It is possible that it carries out the mismatch recognition step. This protein has a weak ATPase activity. The chain is DNA mismatch repair protein MutS from Saccharophagus degradans (strain 2-40 / ATCC 43961 / DSM 17024).